A 201-amino-acid chain; its full sequence is Large ribosomal subunit protein bL25 (201 aa).

The protein belongs to the bacterial ribosomal protein bL25 family. CTC subfamily. In terms of assembly, part of the 50S ribosomal subunit; part of the 5S rRNA/L5/L18/L25 subcomplex. Contacts the 5S rRNA. Binds to the 5S rRNA independently of L5 and L18.

This is one of the proteins that binds to the 5S RNA in the ribosome where it forms part of the central protuberance. This chain is Large ribosomal subunit protein bL25, found in Burkholderia vietnamiensis (strain G4 / LMG 22486) (Burkholderia cepacia (strain R1808)).